The sequence spans 42 residues: MELVSLCNTITIISHSVLYVSLSYYIINPCTSASSNFDDSFS.

This is an uncharacterized protein from Saccharomyces cerevisiae (strain ATCC 204508 / S288c) (Baker's yeast).